The sequence spans 341 residues: Retinol dehydrogenase 10 (341 aa).

The chain crosses the membrane as a helical; Signal-anchor span at residues 3-23 (IVVEFFVVTFKVLWAFVLAAA). Residue 40–64 (LITGAGSGLGRLFALEFARRRALLV) coordinates NADP(+). Serine 197 lines the substrate pocket. Tyrosine 210 acts as the Proton acceptor in catalysis.

This sequence belongs to the short-chain dehydrogenases/reductases (SDR) family. As to expression, detected in retinal pigment epithelium (at protein level). Detected in retina, retinal pigment epithelium, and at lower levels in cornea, liver, kidney, pancreas, lung, brain and skeletal muscle.

It localises to the microsome membrane. Its subcellular location is the endoplasmic reticulum membrane. The enzyme catalyses all-trans-retinol + NADP(+) = all-trans-retinal + NADPH + H(+). It participates in cofactor metabolism; retinol metabolism. Functionally, retinol dehydrogenase with a clear preference for NADP. Converts all-trans-retinol to all-trans-retinal. Has no detectable activity towards 11-cis-retinol, 9-cis-retinol and 13-cis-retinol. In Bos taurus (Bovine), this protein is Retinol dehydrogenase 10 (RDH10).